Reading from the N-terminus, the 200-residue chain is Dephospho-CoA kinase (200 aa).

The DPCK domain occupies 3–200 (KVGLTGGIGS…EELQRRLHSR (198 aa)). 11-16 (GSGKSS) is a binding site for ATP.

This sequence belongs to the CoaE family.

It localises to the cytoplasm. The catalysed reaction is 3'-dephospho-CoA + ATP = ADP + CoA + H(+). It functions in the pathway cofactor biosynthesis; coenzyme A biosynthesis; CoA from (R)-pantothenate: step 5/5. Its function is as follows. Catalyzes the phosphorylation of the 3'-hydroxyl group of dephosphocoenzyme A to form coenzyme A. This is Dephospho-CoA kinase from Thermobifida fusca (strain YX).